A 129-amino-acid polypeptide reads, in one-letter code: Protein yippee-like (129 aa).

Residues K12–D109 enclose the Yippee domain. Zn(2+) is bound by residues C16, C19, C72, and C75.

Belongs to the yippee family.

This chain is Protein yippee-like, found in Solanum tuberosum (Potato).